Reading from the N-terminus, the 224-residue chain is MKFLSVLSLAITLAAAAPVEVETGVALETRQSSTRNELETGSSSACPKVIYIFARASTEPGNMGISAGPIVADALERIYGANNVWVQGVGGPYLADLASNFLPDGTSSAAINEARRLFTLANTKCPNAAIVSGGYSQGTAVMAGSISGLSTTIKNQIKGVVLFGYTKNLQNLGRIPNFETSKTEVYCDIADAVCYGTLFILPAHFLYQTDAAVAAPRFLQARIG.

The first 16 residues, 1–16 (MKFLSVLSLAITLAAA), serve as a signal peptide directing secretion. An intrachain disulfide couples cysteine 46 to cysteine 125. Serine 136 serves as the catalytic Nucleophile. Residues cysteine 187 and cysteine 194 are joined by a disulfide bond. Aspartate 191 is an active-site residue. The active-site Proton donor/acceptor is the histidine 204.

The protein belongs to the cutinase family. Post-translationally, the 2 disulfide bonds play a critical role in holding the catalytic residues in juxta-position; reduction of the disulfide bridges results in the complete inactivation of the enzyme. The N-terminus is blocked.

It is found in the secreted. It catalyses the reaction cutin + H2O = cutin monomers.. With respect to regulation, inhibited by diisopropyl fluorophosphate (DFP). Catalyzes the hydrolysis of complex carboxylic polyesters found in the cell wall of plants. Degrades cutin, a macromolecule that forms the structure of the plant cuticle. Allows pathogenic fungi to penetrate through the cuticular barrier into the host plant during the initial stage of fungal infection. This chain is Cutinase 1 (CUTA), found in Colletotrichum gloeosporioides (Anthracnose fungus).